A 253-amino-acid polypeptide reads, in one-letter code: MATVKVRDVVFGAGAPKICVPMVGRTLDQLVNETEVLKVLDFDLAEWRVDFFEHVEDIEEVKSALFEIRARLGEKPLLFTFRSKREGGQREVSDDYYGALNKALAQTGEIDLVDVELFQEQSVVRELVDTAHEHGVKVVMSSHDFARTPVKEEILMRLCRMQELGADLPKIAVMPQNASDVLVLLDATNTMREHFADRPFITMSMSGLGGVTRLAGEVFGSALTFGSAVEASAPGQINAADLRNILNLLHMQT.

3-dehydroquinate-binding positions include 46–48 and Arg-82; that span reads EWR. His-143 (proton donor/acceptor) is an active-site residue. Lys-170 functions as the Schiff-base intermediate with substrate in the catalytic mechanism. Residues Arg-213, Ser-232, and Gln-236 each coordinate 3-dehydroquinate.

This sequence belongs to the type-I 3-dehydroquinase family. Homodimer.

It carries out the reaction 3-dehydroquinate = 3-dehydroshikimate + H2O. It participates in metabolic intermediate biosynthesis; chorismate biosynthesis; chorismate from D-erythrose 4-phosphate and phosphoenolpyruvate: step 3/7. Its function is as follows. Involved in the third step of the chorismate pathway, which leads to the biosynthesis of aromatic amino acids. Catalyzes the cis-dehydration of 3-dehydroquinate (DHQ) and introduces the first double bond of the aromatic ring to yield 3-dehydroshikimate. The sequence is that of 3-dehydroquinate dehydratase from Syntrophotalea carbinolica (strain DSM 2380 / NBRC 103641 / GraBd1) (Pelobacter carbinolicus).